We begin with the raw amino-acid sequence, 393 residues long: Na(+)/H(+) antiporter NhaA (393 aa).

11 consecutive transmembrane segments (helical) span residues 14-34 (AAGM…NWSV), 60-80 (LLLW…GLEV), 96-116 (MLPL…FLLF), 125-145 (AGWA…LTLL), 155-175 (VFLL…IALF), 179-199 (QVFW…AYMN), 218-238 (VCIL…GFFI), 263-283 (FLIV…GIVL), 292-312 (LGIA…FSWL), 330-350 (IVAV…ITLL), and 362-382 (YAKL…YLAL).

Belongs to the NhaA Na(+)/H(+) (TC 2.A.33) antiporter family.

The protein resides in the cell inner membrane. The enzyme catalyses Na(+)(in) + 2 H(+)(out) = Na(+)(out) + 2 H(+)(in). Na(+)/H(+) antiporter that extrudes sodium in exchange for external protons. The protein is Na(+)/H(+) antiporter NhaA of Pectobacterium atrosepticum (strain SCRI 1043 / ATCC BAA-672) (Erwinia carotovora subsp. atroseptica).